Reading from the N-terminus, the 292-residue chain is Light-independent protochlorophyllide reductase iron-sulfur ATP-binding protein (292 aa).

Residues 10-15 (GIGKST) and lysine 39 each bind ATP. Serine 14 contributes to the Mg(2+) binding site. Cysteine 95 contributes to the [4Fe-4S] cluster binding site. An ATP-binding site is contributed by 182–183 (NR).

It belongs to the NifH/BchL/ChlL family. In terms of assembly, homodimer. Protochlorophyllide reductase is composed of three subunits; ChlL, ChlN and ChlB. It depends on [4Fe-4S] cluster as a cofactor.

It is found in the plastid. The protein localises to the chloroplast. It carries out the reaction chlorophyllide a + oxidized 2[4Fe-4S]-[ferredoxin] + 2 ADP + 2 phosphate = protochlorophyllide a + reduced 2[4Fe-4S]-[ferredoxin] + 2 ATP + 2 H2O. It functions in the pathway porphyrin-containing compound metabolism; chlorophyll biosynthesis (light-independent). Component of the dark-operative protochlorophyllide reductase (DPOR) that uses Mg-ATP and reduced ferredoxin to reduce ring D of protochlorophyllide (Pchlide) to form chlorophyllide a (Chlide). This reaction is light-independent. The L component serves as a unique electron donor to the NB-component of the complex, and binds Mg-ATP. This is Light-independent protochlorophyllide reductase iron-sulfur ATP-binding protein from Huperzia lucidula (Shining clubmoss).